We begin with the raw amino-acid sequence, 1434 residues long: Gag-Pol polyprotein (1434 aa).

Gly2 is lipidated: N-myristoyl glycine; by host. An interaction with Gp41 region spans residues 7–31; sequence VLSGGKLDAWEKIRLRPGGKKKYRL. Residues 8-43 are interaction with host CALM1; it reads LSGGKLDAWEKIRLRPGGKKKYRLKHIVWASRELKR. The segment at 12–19 is interaction with host AP3D1; it reads KLDAWEKI. An interaction with membrane phosphatidylinositol 4,5-bisphosphate and RNA region spans residues 14–33; sequence DAWEKIRLRPGGKKKYRLKH. A Nuclear export signal motif is present at residues 16 to 22; sequence WEKIRLR. Residues 26-32 carry the Nuclear localization signal motif; it reads KKKYRLK. Residues 73–77 form an interaction with membrane phosphatidylinositol 4,5-bisphosphate region; the sequence is EELKS. A compositionally biased stretch (basic and acidic residues) spans 103–112; sequence KLQEEQDKHQ. The tract at residues 103–124 is disordered; sequence KLQEEQDKHQQKTQQATADKGV. Tyr132 carries the phosphotyrosine; by host modification. The interval 189–227 is interaction with human PPIA/CYPA and NUP153; it reads NTVGGHQAAMQMLKDTINEEAAEWDRLHPVHAGPIPPGQ. Residues 277–363 form a dimerization/Multimerization of capsid protein p24 region; that stretch reads YSPVSILDIK…GGPSHKARIL (87 aa). CCHC-type zinc fingers lie at residues 389–406 and 410–427; these read VKCFNCGKEGHIARNCRA and RGCWKCGQEGHQMKDCTE. A disordered region spans residues 443 to 483; the sequence is EARKFSSEQTRANSPASRELRVRGGDSSLPEAGAERQGTGS. Positions 449–458 are enriched in polar residues; sequence SEQTRANSPA. The segment at 488 to 492 is dimerization of protease; sequence PQITL. The Peptidase A2 domain maps to 507-576; sequence REALLDTGAD…TPVNIIGRNM (70 aa). Asp512 (for protease activity; shared with dimeric partner) is an active-site residue. Dimerization of protease stretches follow at residues 536–542 and 575–587; these read GIGGFIK and NMLTQIGCTLNFP. The 191-residue stretch at 630-820 folds into the Reverse transcriptase domain; the sequence is EGKISKIGPE…PPFLWMGYEL (191 aa). Residues Asp696, Asp771, and Asp772 each contribute to the Mg(2+) site. Residues 813 to 821 form an RT 'primer grip' region; it reads FLWMGYELH. The Tryptophan repeat motif signature appears at 984–1000; that stretch reads WEIWWTEYWQATWIPEW. Positions 1020–1143 constitute an RNase H type-1 domain; it reads IIGAETFYVD…VDKLVSTGIR (124 aa). 4 residues coordinate Mg(2+): Asp1029, Glu1064, Asp1084, and Asp1135. Residues 1149–1190 form an Integrase-type zinc finger; sequence DGIDKAQEEHEKYHSNWRAMASDFNLPPVVAKEIVASCDKCQ. Zn(2+) is bound by residues His1158, His1162, Cys1186, and Cys1189. One can recognise an Integrase catalytic domain in the interval 1200–1350; the sequence is VDCSPGIWQL…SAGERIIDII (151 aa). Asp1210, Asp1262, and Glu1298 together coordinate Mg(2+). Residues 1369 to 1416 constitute a DNA-binding region (integrase-type); it reads FRVYFRDSRDPVWKGPAKLLWKGEGAVVIQDNNEIKVIPRRKAKIIRD.

Homotrimer; further assembles as hexamers of trimers. Interacts with gp41 (via C-terminus). Interacts with host CALM1; this interaction induces a conformational change in the Matrix protein, triggering exposure of the myristate group. Interacts with host AP3D1; this interaction allows the polyprotein trafficking to multivesicular bodies during virus assembly. Part of the pre-integration complex (PIC) which is composed of viral genome, matrix protein, Vpr and integrase. In terms of assembly, homodimer; the homodimer further multimerizes as homohexamers or homopentamers. Interacts with human PPIA/CYPA; This interaction stabilizes the capsid. Interacts with human NUP153. Interacts with host PDZD8; this interaction stabilizes the capsid. Interacts with monkey TRIM5; this interaction destabilizes the capsid. As to quaternary structure, homodimer, whose active site consists of two apposed aspartic acid residues. Heterodimer of p66 RT and p51 RT (RT p66/p51). Heterodimerization of RT is essential for DNA polymerase activity. The overall folding of the subdomains is similar in p66 RT and p51 RT but the spatial arrangements of the subdomains are dramatically different. In terms of assembly, homotetramer; may further associate as a homohexadecamer. Part of the pre-integration complex (PIC) which is composed of viral genome, matrix protein, Vpr and integrase. Interacts with human SMARCB1/INI1 and human PSIP1/LEDGF isoform 1. Interacts with human KPNA3; this interaction might play a role in nuclear import of the pre-integration complex. Interacts with human NUP153; this interaction might play a role in nuclear import of the pre-integration complex. Mg(2+) is required as a cofactor. In terms of processing, specific enzymatic cleavages by the viral protease yield mature proteins. The protease is released by autocatalytic cleavage. The polyprotein is cleaved during and after budding, this process is termed maturation. Proteolytic cleavage of p66 RT removes the RNase H domain to yield the p51 RT subunit. Nucleocapsid protein p7 might be further cleaved after virus entry. Tyrosine phosphorylated presumably in the virion by a host kinase. Phosphorylation is apparently not a major regulator of membrane association. Post-translationally, phosphorylated possibly by host MAPK1; this phosphorylation is necessary for Pin1-mediated virion uncoating. In terms of processing, methylated by host PRMT6, impairing its function by reducing RNA annealing and the initiation of reverse transcription.

The protein resides in the host cell membrane. It localises to the host endosome. The protein localises to the host multivesicular body. It is found in the virion membrane. Its subcellular location is the host nucleus. The protein resides in the host cytoplasm. It localises to the virion. It carries out the reaction Specific for a P1 residue that is hydrophobic, and P1' variable, but often Pro.. It catalyses the reaction Endohydrolysis of RNA in RNA/DNA hybrids. Three different cleavage modes: 1. sequence-specific internal cleavage of RNA. Human immunodeficiency virus type 1 and Moloney murine leukemia virus enzymes prefer to cleave the RNA strand one nucleotide away from the RNA-DNA junction. 2. RNA 5'-end directed cleavage 13-19 nucleotides from the RNA end. 3. DNA 3'-end directed cleavage 15-20 nucleotides away from the primer terminus.. The catalysed reaction is 3'-end directed exonucleolytic cleavage of viral RNA-DNA hybrid.. The enzyme catalyses DNA(n) + a 2'-deoxyribonucleoside 5'-triphosphate = DNA(n+1) + diphosphate. Its activity is regulated as follows. Protease: The viral protease is inhibited by many synthetic protease inhibitors (PIs), such as amprenavir, atazanavir, indinavir, loprinavir, nelfinavir, ritonavir and saquinavir. Use of protease inhibitors in tritherapy regimens permit more ambitious therapeutic strategies. Reverse transcriptase/ribonuclease H: RT can be inhibited either by nucleoside RT inhibitors (NRTIs) or by non nucleoside RT inhibitors (NNRTIs). NRTIs act as chain terminators, whereas NNRTIs inhibit DNA polymerization by binding a small hydrophobic pocket near the RT active site and inducing an allosteric change in this region. Classical NRTIs are abacavir, adefovir (PMEA), didanosine (ddI), lamivudine (3TC), stavudine (d4T), tenofovir (PMPA), zalcitabine (ddC), and zidovudine (AZT). Classical NNRTIs are atevirdine (BHAP U-87201E), delavirdine, efavirenz (DMP-266), emivirine (I-EBU), and nevirapine (BI-RG-587). The tritherapies used as a basic effective treatment of AIDS associate two NRTIs and one NNRTI. In terms of biological role, mediates, with Gag polyprotein, the essential events in virion assembly, including binding the plasma membrane, making the protein-protein interactions necessary to create spherical particles, recruiting the viral Env proteins, and packaging the genomic RNA via direct interactions with the RNA packaging sequence (Psi). Gag-Pol polyprotein may regulate its own translation, by the binding genomic RNA in the 5'-UTR. At low concentration, the polyprotein would promote translation, whereas at high concentration, the polyprotein would encapsidate genomic RNA and then shut off translation. Targets the polyprotein to the plasma membrane via a multipartite membrane-binding signal, that includes its myristoylated N-terminus. Matrix protein is part of the pre-integration complex. Implicated in the release from host cell mediated by Vpu. Binds to RNA. Its function is as follows. Forms the conical core that encapsulates the genomic RNA-nucleocapsid complex in the virion. Most core are conical, with only 7% tubular. The core is constituted by capsid protein hexamer subunits. The core is disassembled soon after virion entry. Host restriction factors such as TRIM5-alpha or TRIMCyp bind retroviral capsids and cause premature capsid disassembly, leading to blocks in reverse transcription. Capsid restriction by TRIM5 is one of the factors which restricts HIV-1 to the human species. Host PIN1 apparently facilitates the virion uncoating. On the other hand, interactions with PDZD8 or CYPA stabilize the capsid. Functionally, encapsulates and protects viral dimeric unspliced genomic RNA (gRNA). Binds these RNAs through its zinc fingers. Acts as a nucleic acid chaperone which is involved in rearangement of nucleic acid secondary structure during gRNA retrotranscription. Also facilitates template switch leading to recombination. As part of the polyprotein, participates in gRNA dimerization, packaging, tRNA incorporation and virion assembly. In terms of biological role, aspartyl protease that mediates proteolytic cleavages of Gag and Gag-Pol polyproteins during or shortly after the release of the virion from the plasma membrane. Cleavages take place as an ordered, step-wise cascade to yield mature proteins. This process is called maturation. Displays maximal activity during the budding process just prior to particle release from the cell. Also cleaves Nef and Vif, probably concomitantly with viral structural proteins on maturation of virus particles. Hydrolyzes host EIF4GI and PABP1 in order to shut off the capped cellular mRNA translation. The resulting inhibition of cellular protein synthesis serves to ensure maximal viral gene expression and to evade host immune response. Also mediates cleavage of host YTHDF3. Mediates cleavage of host CARD8, thereby activating the CARD8 inflammasome, leading to the clearance of latent HIV-1 in patient CD4(+) T-cells after viral reactivation; in contrast, HIV-1 can evade CARD8-sensing when its protease remains inactive in infected cells prior to viral budding. Multifunctional enzyme that converts the viral RNA genome into dsDNA in the cytoplasm, shortly after virus entry into the cell. This enzyme displays a DNA polymerase activity that can copy either DNA or RNA templates, and a ribonuclease H (RNase H) activity that cleaves the RNA strand of RNA-DNA heteroduplexes in a partially processive 3' to 5' endonucleasic mode. Conversion of viral genomic RNA into dsDNA requires many steps. A tRNA(3)-Lys binds to the primer-binding site (PBS) situated at the 5'-end of the viral RNA. RT uses the 3' end of the tRNA primer to perform a short round of RNA-dependent minus-strand DNA synthesis. The reading proceeds through the U5 region and ends after the repeated (R) region which is present at both ends of viral RNA. The portion of the RNA-DNA heteroduplex is digested by the RNase H, resulting in a ssDNA product attached to the tRNA primer. This ssDNA/tRNA hybridizes with the identical R region situated at the 3' end of viral RNA. This template exchange, known as minus-strand DNA strong stop transfer, can be either intra- or intermolecular. RT uses the 3' end of this newly synthesized short ssDNA to perform the RNA-dependent minus-strand DNA synthesis of the whole template. RNase H digests the RNA template except for two polypurine tracts (PPTs) situated at the 5'-end and near the center of the genome. It is not clear if both polymerase and RNase H activities are simultaneous. RNase H probably can proceed both in a polymerase-dependent (RNA cut into small fragments by the same RT performing DNA synthesis) and a polymerase-independent mode (cleavage of remaining RNA fragments by free RTs). Secondly, RT performs DNA-directed plus-strand DNA synthesis using the PPTs that have not been removed by RNase H as primers. PPTs and tRNA primers are then removed by RNase H. The 3' and 5' ssDNA PBS regions hybridize to form a circular dsDNA intermediate. Strand displacement synthesis by RT to the PBS and PPT ends produces a blunt ended, linear dsDNA copy of the viral genome that includes long terminal repeats (LTRs) at both ends. Its function is as follows. Catalyzes viral DNA integration into the host chromosome, by performing a series of DNA cutting and joining reactions. This enzyme activity takes place after virion entry into a cell and reverse transcription of the RNA genome in dsDNA. The first step in the integration process is 3' processing. This step requires a complex comprising the viral genome, matrix protein, Vpr and integrase. This complex is called the pre-integration complex (PIC). The integrase protein removes 2 nucleotides from each 3' end of the viral DNA, leaving recessed CA OH's at the 3' ends. In the second step, the PIC enters cell nucleus. This process is mediated through integrase and Vpr proteins, and allows the virus to infect a non dividing cell. This ability to enter the nucleus is specific of lentiviruses, other retroviruses cannot and rely on cell division to access cell chromosomes. In the third step, termed strand transfer, the integrase protein joins the previously processed 3' ends to the 5' ends of strands of target cellular DNA at the site of integration. The 5'-ends are produced by integrase-catalyzed staggered cuts, 5 bp apart. A Y-shaped, gapped, recombination intermediate results, with the 5'-ends of the viral DNA strands and the 3' ends of target DNA strands remaining unjoined, flanking a gap of 5 bp. The last step is viral DNA integration into host chromosome. This involves host DNA repair synthesis in which the 5 bp gaps between the unjoined strands are filled in and then ligated. Since this process occurs at both cuts flanking the HIV genome, a 5 bp duplication of host DNA is produced at the ends of HIV-1 integration. Alternatively, Integrase may catalyze the excision of viral DNA just after strand transfer, this is termed disintegration. The polypeptide is Gag-Pol polyprotein (gag-pol) (Homo sapiens (Human)).